A 489-amino-acid chain; its full sequence is Putative L,D-transpeptidase HI_1667 (489 aa).

A helical membrane pass occupies residues 10-29 (LSLFALSLSMMMSGCVLVGL). A L,D-TPase catalytic domain is found at 254–433 (NGIFVNIPSY…ETRKNTVLAS (180 aa)). Residue His-384 is the Proton donor/acceptor of the active site. Cys-403 functions as the Nucleophile in the catalytic mechanism.

This sequence belongs to the YkuD family.

Its subcellular location is the membrane. Its pathway is cell wall biogenesis; peptidoglycan biosynthesis. The chain is Putative L,D-transpeptidase HI_1667 from Haemophilus influenzae (strain ATCC 51907 / DSM 11121 / KW20 / Rd).